A 397-amino-acid chain; its full sequence is Elongation factor Tu-2 (397 aa).

The 197-residue stretch at 10–206 folds into the tr-type G domain; the sequence is KPHVNIGTIG…AVDEFVPEPV (197 aa). A G1 region spans residues 19–26; sequence GHIDHGKT. 19-26 serves as a coordination point for GTP; that stretch reads GHIDHGKT. Mg(2+) is bound at residue Thr26. The segment at 62 to 66 is G2; that stretch reads GITIS. A G3 region spans residues 83-86; sequence DCPG. GTP-binding positions include 83–87 and 138–141; these read DCPGH and NKTD. The interval 138-141 is G4; sequence NKTD. The tract at residues 176 to 178 is G5; it reads SAL.

The protein belongs to the TRAFAC class translation factor GTPase superfamily. Classic translation factor GTPase family. EF-Tu/EF-1A subfamily. As to quaternary structure, monomer.

It is found in the cytoplasm. The enzyme catalyses GTP + H2O = GDP + phosphate + H(+). Functionally, GTP hydrolase that promotes the GTP-dependent binding of aminoacyl-tRNA to the A-site of ribosomes during protein biosynthesis. The chain is Elongation factor Tu-2 from Streptomyces ramocissimus.